The chain runs to 329 residues: UDP-2,3-diacylglucosamine pyrophosphatase LpxG (329 aa).

A helical membrane pass occupies residues 2–24 (FVSVGITASLTTILAAPVLTWVW). Positions 59, 61, 91, 123, 257, and 259 each coordinate a divalent metal cation.

It belongs to the metallophosphoesterase superfamily. LpxG family. Mn(2+) is required as a cofactor.

The protein localises to the cell inner membrane. The enzyme catalyses UDP-2,3-diacyl-alpha-D-glucosamine + H2O = 2,3-diacyl-alpha-D-glucosaminyl 1-phosphate + UMP + 2 H(+). Its pathway is glycolipid biosynthesis; lipid IV(A) biosynthesis. Functionally, hydrolyzes the pyrophosphate bond of UDP-2,3-diacylglucosamine to form 2,3-diacylglucosamine 1-phosphate (lipid X) and UMP by catalyzing the attack of water at the alpha-P atom. Involved in the biosynthesis of lipid A, a phosphorylated glycolipid that anchors the lipooligosaccharide (LOS) to the outer membrane of the cell. Can functionally complement lpxH deficiency in E.coli. Overexpression of LpxG results in toxic accumulation of lipid X and profoundly reduces the infectivity of C.trachomatis. Can utilize UDP-2-N,3-O-bis((3R)-3-hydroxytetradecanoyl)-alpha-D-glucosamine as substrate in vitro, but the substrate is likely UDP-2-N-((3R)-3-hydroxyicosanoyl),3-O-(tetradecanoyl)-alpha-D-glucosamine in vivo. In Chlamydia trachomatis serovar D (strain ATCC VR-885 / DSM 19411 / UW-3/Cx), this protein is UDP-2,3-diacylglucosamine pyrophosphatase LpxG.